We begin with the raw amino-acid sequence, 466 residues long: RUS family member 1 (466 aa).

Ala-2 bears the N-acetylalanine mark. The helical transmembrane segment at 245 to 265 (LLMLPLVSDCLSLSLGCFILL) threads the bilayer.

The protein belongs to the RUS1 family.

The protein resides in the membrane. The sequence is that of RUS family member 1 (Rusf1) from Rattus norvegicus (Rat).